A 149-amino-acid chain; its full sequence is D-aminoacyl-tRNA deacylase (149 aa).

The Gly-cisPro motif, important for rejection of L-amino acids signature appears at 137-138 (GP).

It belongs to the DTD family. Homodimer.

Its subcellular location is the cytoplasm. The catalysed reaction is glycyl-tRNA(Ala) + H2O = tRNA(Ala) + glycine + H(+). It carries out the reaction a D-aminoacyl-tRNA + H2O = a tRNA + a D-alpha-amino acid + H(+). Its function is as follows. An aminoacyl-tRNA editing enzyme that deacylates mischarged D-aminoacyl-tRNAs. Also deacylates mischarged glycyl-tRNA(Ala), protecting cells against glycine mischarging by AlaRS. Acts via tRNA-based rather than protein-based catalysis; rejects L-amino acids rather than detecting D-amino acids in the active site. By recycling D-aminoacyl-tRNA to D-amino acids and free tRNA molecules, this enzyme counteracts the toxicity associated with the formation of D-aminoacyl-tRNA entities in vivo and helps enforce protein L-homochirality. The polypeptide is D-aminoacyl-tRNA deacylase (Clostridium perfringens (strain ATCC 13124 / DSM 756 / JCM 1290 / NCIMB 6125 / NCTC 8237 / Type A)).